The primary structure comprises 492 residues: Sestrin-3 (492 aa).

The segment at 62-243 is N-terminal domain; may mediate the alkylhydroperoxide reductase activity; that stretch reads LVEEYSTSGR…VCDLANDNSI (182 aa). The active-site Cysteine sulfenic acid (-SOH) intermediate is Cys-121. Residues 310-492 are C-terminal domain; mediates TORC1 regulation; that stretch reads PHSDFEDDVI…ALRAITRHLT (183 aa). L-leucine-binding positions include 386-389, Thr-398, and Glu-463; that span reads TYNT.

This sequence belongs to the sestrin family. As to quaternary structure, interacts with the GATOR2 complex which is composed of MIOS, SEC13, SEH1L, WDR24 and WDR59; the interaction is not regulated by leucine. Interacts with RRAGA, RRAGB, RRAGC and RRAGD; may function as a guanine nucleotide dissociation inhibitor for RRAGs and regulate them. Interacts with the TORC2 complex; through RICTOR. As to expression, detected in liver and skeletal muscles.

It localises to the cytoplasm. It catalyses the reaction a hydroperoxide + L-cysteinyl-[protein] = S-hydroxy-L-cysteinyl-[protein] + an alcohol. In terms of biological role, may function as an intracellular leucine sensor that negatively regulates the TORC1 signaling pathway. May also regulate the insulin-receptor signaling pathway through activation of TORC2. This metabolic regulator may also play a role in protection against oxidative and genotoxic stresses. May prevent the accumulation of reactive oxygen species (ROS) through the alkylhydroperoxide reductase activity born by the N-terminal domain of the protein. In Mus musculus (Mouse), this protein is Sestrin-3.